Reading from the N-terminus, the 335-residue chain is Foldase protein PrsA (335 aa).

Positions 1-22 are cleaved as a signal peptide; sequence MRSAKKLLSVLCLGVFILTFTA. Cys23 carries the N-palmitoyl cysteine lipid modification. Cys23 carries the S-diacylglycerol cysteine lipid modification. Positions 194–285 constitute a PpiC domain; sequence PNTMNVSHIL…FGYHIIKINS (92 aa).

Belongs to the PrsA family.

It localises to the cell membrane. The enzyme catalyses [protein]-peptidylproline (omega=180) = [protein]-peptidylproline (omega=0). In terms of biological role, plays a major role in protein secretion by helping the post-translocational extracellular folding of several secreted proteins. The protein is Foldase protein PrsA of Clostridium botulinum (strain Loch Maree / Type A3).